The chain runs to 89 residues: Small ribosomal subunit protein uS15 (89 aa).

Belongs to the universal ribosomal protein uS15 family. As to quaternary structure, part of the 30S ribosomal subunit. Forms a bridge to the 50S subunit in the 70S ribosome, contacting the 23S rRNA.

Its function is as follows. One of the primary rRNA binding proteins, it binds directly to 16S rRNA where it helps nucleate assembly of the platform of the 30S subunit by binding and bridging several RNA helices of the 16S rRNA. In terms of biological role, forms an intersubunit bridge (bridge B4) with the 23S rRNA of the 50S subunit in the ribosome. In Paraburkholderia phymatum (strain DSM 17167 / CIP 108236 / LMG 21445 / STM815) (Burkholderia phymatum), this protein is Small ribosomal subunit protein uS15.